Here is a 169-residue protein sequence, read N- to C-terminus: Probable GPI-anchored adhesin-like protein PGA22 (169 aa).

The signal sequence occupies residues 1–18 (MKYSTLAWLVIASYTVFA). 4 N-linked (GlcNAc...) asparagine glycosylation sites follow: asparagine 87, asparagine 104, asparagine 111, and asparagine 118. The GPI-anchor amidated glycine moiety is linked to residue glycine 140. Residues 141–169 (PALTTTTVAEAFSLAAGASLGYLVALLFL) constitute a propeptide, removed in mature form.

It is found in the cell membrane. Putative adhesin which may be involved in cell adhesion and virulence. This chain is Probable GPI-anchored adhesin-like protein PGA22 (PGA22), found in Candida albicans (strain SC5314 / ATCC MYA-2876) (Yeast).